The primary structure comprises 214 residues: Probable nicotinate-nucleotide adenylyltransferase (214 aa).

This sequence belongs to the NadD family.

The enzyme catalyses nicotinate beta-D-ribonucleotide + ATP + H(+) = deamido-NAD(+) + diphosphate. Its pathway is cofactor biosynthesis; NAD(+) biosynthesis; deamido-NAD(+) from nicotinate D-ribonucleotide: step 1/1. In terms of biological role, catalyzes the reversible adenylation of nicotinate mononucleotide (NaMN) to nicotinic acid adenine dinucleotide (NaAD). This chain is Probable nicotinate-nucleotide adenylyltransferase, found in Aeromonas hydrophila subsp. hydrophila (strain ATCC 7966 / DSM 30187 / BCRC 13018 / CCUG 14551 / JCM 1027 / KCTC 2358 / NCIMB 9240 / NCTC 8049).